Reading from the N-terminus, the 1111-residue chain is Cell death abnormality protein 1 (1111 aa).

Residues 1–18 (MRLILLVLLATWQVVVDT) form the signal peptide. Residues 19–910 (RAPTFPDKLT…NGAGRSTGLT (892 aa)) are Extracellular-facing. The EMI domain maps to 41–113 (GDHVCTVKTI…QCCDGYYQTK (73 aa)). 15 disulfide bridges follow: C45-C106, C71-C80, C105-C117, C121-C130, C125-C136, C138-C147, C160-C172, C166-C179, C181-C190, C203-C215, C209-C221, C223-C232, C245-C257, C251-C264, and C266-C275. The N-linked (GlcNAc...) asparagine glycan is linked to N66. EGF-like domains follow at residues 118–148 (LPDC…KYCA), 156–191 (WGLG…ERCE), 199–233 (WGPN…EFCL), and 241–276 (FGAE…ALCE). N-linked (GlcNAc...) asparagine glycosylation is found at N333 and N345. Positions 421-458 (YGPNCEKQAMCDWNHASECNPETGSCVCKPGRTGKNCS) constitute an EGF-like 5 domain. Cystine bridges form between C425–C439, C431–C446, and C448–C457. The N-linked (GlcNAc...) asparagine glycan is linked to N456. The stretch at 629–680 (DQKCDPNTFGFLCQETVTPSPCASTDPKNGVCLSCPPGSSGIHCEHNCPAGS) is one FU repeat. Residues 681–716 (YGDGCQQVCSCADGHGCDPTTGECICEPGYHGKTCS) form the EGF-like 6 domain. Cystine bridges form between C685–C697, C691–C704, and C706–C715. The chain crosses the membrane as a helical span at residues 911 to 931 (WFFVLLIVALCGGLGLIALFY). The segment at 931-1007 (YRNKYQKEKD…EEELENKKIH (77 aa)) is interaction with trim-21. At 932–1111 (RNKYQKEKDP…KKRAQDNLYT (180 aa)) the chain is on the cytoplasmic side. Disordered stretches follow at residues 940–993 (DPDM…PNGL) and 1006–1111 (IHGR…NLYT). An NPXY motif is present at residues 962-965 (NPLY). A compositionally biased stretch (polar residues) spans 963 to 980 (PLYSRQSVFPDSDAFSSE). Phosphotyrosine; by SRC is present on Y1019. Positions 1019 to 1022 (YASL) match the YXXL motif. Residues 1030-1039 (SSSSASASAS) show a composition bias toward low complexity. A compositionally biased stretch (polar residues) spans 1068 to 1083 (NSISPAHAVTTSNHNE).

Interacts (via C-terminus) with ced-6 (via PTB domain). Interacts with nck-1; the interaction is required for ced-1 degradation through the proteasome pathway. Interacts with V-ATPase vha-10. Post-translationally, phosphorylation of Tyr-1019, within the YXXL motif, by src-1 is thought to initiate phagosomal formation. In terms of processing, 'Lys-48'-linked polyubiquitination by trim-21 leads to proteasomal degradation. As to expression, expressed in engulfing cells and syncytium hypodermal cells. Ced-7 is necessary for clustering around cell corpses prior to engulfment.

It localises to the cell membrane. Its subcellular location is the cytoplasmic vesicle. It is found in the phagosome membrane. Its function is as follows. Involved in programmed cell death, also called apoptosis, in both somatic and germ cells. Acts by recruiting ced-6 to phagosomes which enables actin-dependent cytoskeletal reorganization and subsequent engulfment of the apoptotic cell corpse. Has a role in the association of ppk-3 and rab-7 with the phagosomal surface which is necessary for the incorporation of lysosomes to phagosomes during phagosome maturation. Activates the expression of unfolded protein response genes, which are involved in the immune response to live bacteria. This Caenorhabditis elegans protein is Cell death abnormality protein 1.